The sequence spans 364 residues: MYIKNVHLINFRNYDDMYLELSPNTNIFVGNNAQGKTNILESIYYSSIGKSHRTNKDKDLIKWDKNNTYLRTYVSRERLDKTIDINIFKNGKKAITVNKIKIKKISELMGNLNVVMFSPEDLRIIKDYPGNRRKFLDIELCKINNVYYHDLVQYNKILSERNTALKNWNNKINDIIDIYDEQLSKYGAFIIKERNKYLDKLNIIGKNIHKKITNDLEDINFRYLTNIKDFDNAEKELLIVLKKNRKKDLERNSTSIGPHRDDFEVSINNIDTRIFGSQGQQRTAVLTLKFASLEIIKNIIGEYPVLLLDDVLSELDSNRQKFVLNSIDKIQTIITCTGIEEIDKYLHKKQSQLYLVNNGKIKRV.

30-37 (GNNAQGKT) provides a ligand contact to ATP.

Belongs to the RecF family.

It localises to the cytoplasm. The RecF protein is involved in DNA metabolism; it is required for DNA replication and normal SOS inducibility. RecF binds preferentially to single-stranded, linear DNA. It also seems to bind ATP. This is DNA replication and repair protein RecF from Clostridium botulinum (strain Langeland / NCTC 10281 / Type F).